The following is a 327-amino-acid chain: Glycerol-3-phosphate dehydrogenase [NAD(P)+] (327 aa).

Positions 10, 11, 31, and 108 each coordinate NADPH. 3 residues coordinate sn-glycerol 3-phosphate: Lys108, Gly136, and Ser138. An NADPH-binding site is contributed by Ala140. Residues Lys191, Asp246, Ser256, Arg257, and Asn258 each coordinate sn-glycerol 3-phosphate. Lys191 functions as the Proton acceptor in the catalytic mechanism. Arg257 contributes to the NADPH binding site. Residues Leu281 and Glu283 each coordinate NADPH.

The protein belongs to the NAD-dependent glycerol-3-phosphate dehydrogenase family.

It localises to the cytoplasm. It catalyses the reaction sn-glycerol 3-phosphate + NAD(+) = dihydroxyacetone phosphate + NADH + H(+). The enzyme catalyses sn-glycerol 3-phosphate + NADP(+) = dihydroxyacetone phosphate + NADPH + H(+). It functions in the pathway membrane lipid metabolism; glycerophospholipid metabolism. In terms of biological role, catalyzes the reduction of the glycolytic intermediate dihydroxyacetone phosphate (DHAP) to sn-glycerol 3-phosphate (G3P), the key precursor for phospholipid synthesis. This chain is Glycerol-3-phosphate dehydrogenase [NAD(P)+], found in Ehrlichia ruminantium (strain Gardel).